Reading from the N-terminus, the 566-residue chain is Membrane protein insertase YidC (566 aa).

5 helical membrane passes run Ile-3–Trp-23, Gly-346–Val-366, Trp-369–Ala-389, Gly-436–Ile-456, and Met-509–Leu-529.

This sequence belongs to the OXA1/ALB3/YidC family. Type 1 subfamily. Interacts with the Sec translocase complex via SecD. Specifically interacts with transmembrane segments of nascent integral membrane proteins during membrane integration.

The protein localises to the cell inner membrane. Required for the insertion and/or proper folding and/or complex formation of integral membrane proteins into the membrane. Involved in integration of membrane proteins that insert both dependently and independently of the Sec translocase complex, as well as at least some lipoproteins. Aids folding of multispanning membrane proteins. The chain is Membrane protein insertase YidC from Coxiella burnetii (strain RSA 331 / Henzerling II).